A 174-amino-acid polypeptide reads, in one-letter code: ATP-dependent protease subunit HslV (174 aa).

The active site involves threonine 2. 3 residues coordinate Na(+): alanine 156, cysteine 159, and threonine 162.

This sequence belongs to the peptidase T1B family. HslV subfamily. A double ring-shaped homohexamer of HslV is capped on each side by a ring-shaped HslU homohexamer. The assembly of the HslU/HslV complex is dependent on binding of ATP.

Its subcellular location is the cytoplasm. It catalyses the reaction ATP-dependent cleavage of peptide bonds with broad specificity.. With respect to regulation, allosterically activated by HslU binding. Functionally, protease subunit of a proteasome-like degradation complex believed to be a general protein degrading machinery. This Agrobacterium fabrum (strain C58 / ATCC 33970) (Agrobacterium tumefaciens (strain C58)) protein is ATP-dependent protease subunit HslV.